Here is a 218-residue protein sequence, read N- to C-terminus: Uracil-DNA glycosylase (218 aa).

The Proton acceptor role is filled by D68.

Belongs to the uracil-DNA glycosylase (UDG) superfamily. UNG family. As to quaternary structure, homodimer. Interacts with protein OPG148. Component of the Uracil-DNA glycosylase(UDG)-OPG148-polymerase complex; OPG148 and UDG form a heterodimeric processivity factor that associates with OPG71 to form the processive polymerase holoenzyme.

It carries out the reaction Hydrolyzes single-stranded DNA or mismatched double-stranded DNA and polynucleotides, releasing free uracil.. Functionally, plays an essential role in viral replication as a component of the DNA polymerase processivity factor. Excises uracil residues from the DNA which can arise as a result of misincorporation of dUMP residues by DNA polymerase or due to deamination of cytosine. This chain is Uracil-DNA glycosylase (OPG116), found in Bos taurus (Bovine).